The chain runs to 434 residues: Cytochrome P450 144 (434 aa).

The substrate site is built by Asp124 and His128. Heme contacts are provided by Arg132, Arg326, His383, and Cys385.

It belongs to the cytochrome P450 family. As to quaternary structure, monomer. The cofactor is heme.

The protein is Cytochrome P450 144 (cyp144) of Mycobacterium tuberculosis (strain CDC 1551 / Oshkosh).